Reading from the N-terminus, the 1220-residue chain is Putative cell agglutination protein SPAPB2C8.01 (1220 aa).

An N-terminal signal peptide occupies residues 1-21 (MAVSRLLILICLYSFVTFAYP). 4 N-linked (GlcNAc...) asparagine glycosylation sites follow: Asn44, Asn72, Asn131, and Asn160. 24 consecutive repeat copies span residues 110 to 145 (NTITTTLYSGSLEFTTTLDSANGTTPATIEVVEPAA), 146 to 181 (GTVTTTIYSGTTPFNTTLASATDTVPGTVEVVEPEA), 182 to 217 (GTVTTTVYSGTQEYTTTLATASGTVSGTVEVVDTAA), 218 to 253 (GTVTTTIYSGTTPFNTTLASATDTVPGTVEVVEPEA), 254 to 289 (GTVTTTVYSGTQEYTTTLATASGTVSGTVEVVDTAA), 290 to 325 (GTVTTTIYSGTTPFNTTLASATDTVPGTVEVVEPEA), 326 to 361 (GTVTTTVYSGTQEYTTTLATASGTVSGTVEVVDTAA), 362 to 397 (GTVTTTIYSGTTPFNTTLASATDTVPGTVEVVEPEA), 398 to 433 (GTVTTTVYSGTQEYTTTLATASGTVSGTVEVVDTAA), 434 to 469 (GTVTTTIYSGTTPFNTTLASATDTVPGTVEVVEPEA), 470 to 505 (GTVTTTVYSGTQEYTTTLATASGTVSGTVEVVDTAA), 506 to 541 (GTVTTTIYSGTTPFNTTLASATDTVPGTVEVVEPEA), 542 to 577 (GTVTTTVYSGTQEYTTTLATASGTVSGTVEVVDTAA), 578 to 613 (GTVTTTIYSGTTPFNTTLASATDTVPGTVEVVEPEA), 614 to 649 (GTVTTTVYSGTQEYTTTLATASGTVSGTVEVIEPAA), 650 to 685 (GTVTTTVYSGTQEYTTTLATASGTVSGTVEVIEPAA), 686 to 721 (GTVTSTVYSGTQEYTTTLATASGTVSGTVEVIEPAA), 722 to 757 (GTVTTTVYSGTQEYTTTLATASGTVSGTVEVIEPAA), 758 to 793 (GTVTTTVYSGSEVYTTTLASASESVPGTVEVVDPEA), 794 to 829 (GSVTTTIYSGSVEYTTVLADASGSVTGTVEVVEPAA), 830 to 865 (GTVTTTVYSGSEVYTTTLASASESVPGTVEVVDPEA), 866 to 901 (GSVTTTIYSGSVEYTTVLADASGSVTGTVEVVEPAA), 902 to 937 (GTVTGTLTSGSQFFTTTIAQASGSVSGNVEVIEPSG), and 938 to 973 (STVTSTIYSGSESFTTTLAVGSGTIPGTVEVILPAP). The interval 110-973 (NTITTTLYSG…GTVEVILPAP (864 aa)) is 24 X 36 AA approximate tandem repeats. The N-linked (GlcNAc...) asparagine glycan is linked to Asn232. N-linked (GlcNAc...) asparagine glycosylation occurs at Asn304. Asn376 carries N-linked (GlcNAc...) asparagine glycosylation. Asn448 carries an N-linked (GlcNAc...) asparagine glycan. A glycan (N-linked (GlcNAc...) asparagine) is linked at Asn520. N-linked (GlcNAc...) asparagine glycosylation occurs at Asn592. The 164-residue stretch at 1039 to 1202 (FTQPAYFGSS…YAATSYAYTA (164 aa)) folds into the PA14 domain.

This sequence belongs to the mam3/map4 family.

The protein localises to the cell surface. May be involved in agglutination during conjugation or other aspects of colony formation. In Schizosaccharomyces pombe (strain 972 / ATCC 24843) (Fission yeast), this protein is Putative cell agglutination protein SPAPB2C8.01.